The following is a 205-amino-acid chain: Keratin-associated protein 4-6 (205 aa).

30 tandem repeats follow at residues 20–24 (CCRPS), 25–29 (CCQTT), 30–34 (CCRTT), 35–39 (CCRPS), 40–44 (CCVSS), 45–49 (CCRPQ), 50–54 (CCQSV), 55–59 (CCQPT), 60–64 (CCRPS), 65–68 (CCPS), 69–73 (CCQTT), 74–78 (CCRTT), 79–83 (CCRPS), 84–88 (CCVSS), 89–93 (CCRPQ), 94–98 (CCQSV), 99–103 (CCQPT), 104–108 (CCRPS), 114–118 (CCRPS), 119–123 (CCVSR), 124–128 (CCRSQ), 129–133 (CCQSV), 134–138 (CCQPT), 139–143 (CCRPS), 144–148 (CCISS), 149–153 (CCRPS), 154–158 (CCESS), 159–163 (CCRPC), 164–168 (CCRPC), and 169–173 (CCLRP). The segment at 20 to 173 (CCRPSCCQTT…CCRPCCCLRP (154 aa)) is 30 X 5 AA repeats of C-C-[IRQVEL]-[SPTR]-[STVQRCP].

This sequence belongs to the KRTAP type 4 family. In terms of assembly, interacts with hair keratins. In terms of tissue distribution, expressed in the hair follicles.

Functionally, in the hair cortex, hair keratin intermediate filaments are embedded in an interfilamentous matrix, consisting of hair keratin-associated proteins (KRTAP), which are essential for the formation of a rigid and resistant hair shaft through their extensive disulfide bond cross-linking with abundant cysteine residues of hair keratins. The matrix proteins include the high-sulfur and high-glycine-tyrosine keratins. The sequence is that of Keratin-associated protein 4-6 (KRTAP4-6) from Homo sapiens (Human).